A 619-amino-acid chain; its full sequence is Secretogranin-2 (619 aa).

The signal sequence occupies residues 1-30 (MTESKAYRFGAVLLLIHLIFLVPGTEAASF). The residue at position 153 (Tyr-153) is a Sulfotyrosine. Residues Ser-176 and Ser-270 each carry the phosphoserine modification. Residues 247–307 (VGGEDWSPME…RKESKDQLSE (61 aa)) are disordered. 2 stretches are compositionally biased toward basic and acidic residues: residues 255 to 286 (MEEK…EMKR) and 295 to 307 (EGNR…QLSE). 4 positions are modified to phosphoserine: Ser-434, Ser-534, Ser-557, and Ser-558.

Belongs to the chromogranin/secretogranin protein family. In terms of assembly, interacts with Secretogranin III/SCG3. Brain. Expression in the pituitary is restricted to the anterior lobe. Expression in the hypothalamus is observed in the neuronal cells and neurons of arcuate nucleus, supraoptic nucleus and median eminence (at protein level).

It localises to the secreted. Neuroendocrine protein of the granin family that regulates the biogenesis of secretory granules. This chain is Secretogranin-2 (Scg2), found in Rattus norvegicus (Rat).